Consider the following 359-residue polypeptide: ATP-dependent kinase YFH7 (359 aa).

31–39 (GPPGSGKST) provides a ligand contact to ATP.

Belongs to the YFH7 family.

In terms of biological role, ATP-dependent kinase that could be involved in endoplasmic reticulum membrane assembly. The sequence is that of ATP-dependent kinase YFH7 (YFH7) from Vanderwaltozyma polyspora (strain ATCC 22028 / DSM 70294 / BCRC 21397 / CBS 2163 / NBRC 10782 / NRRL Y-8283 / UCD 57-17) (Kluyveromyces polysporus).